The following is a 254-amino-acid chain: Hydroxyacylglutathione hydrolase (254 aa).

Zn(2+) contacts are provided by His-54, His-56, Asp-58, His-59, His-111, Asp-130, and His-168.

Belongs to the metallo-beta-lactamase superfamily. Glyoxalase II family. As to quaternary structure, monomer. Requires Zn(2+) as cofactor.

The catalysed reaction is an S-(2-hydroxyacyl)glutathione + H2O = a 2-hydroxy carboxylate + glutathione + H(+). It participates in secondary metabolite metabolism; methylglyoxal degradation; (R)-lactate from methylglyoxal: step 2/2. Functionally, thiolesterase that catalyzes the hydrolysis of S-D-lactoyl-glutathione to form glutathione and D-lactic acid. The chain is Hydroxyacylglutathione hydrolase from Legionella pneumophila (strain Corby).